An 899-amino-acid chain; its full sequence is Protein translocase subunit SecA (899 aa).

ATP-binding positions include Gln-87, 105–109, and Asp-512; that span reads GEGKT. 2 disordered regions span residues 573-592 and 861-899; these read RRID…PGSS and ITVN…CCGK. Zn(2+) contacts are provided by Cys-885, Cys-887, Cys-896, and Cys-897.

Belongs to the SecA family. As to quaternary structure, monomer and homodimer. Part of the essential Sec protein translocation apparatus which comprises SecA, SecYEG and auxiliary proteins SecDF-YajC and YidC. The cofactor is Zn(2+).

It is found in the cell inner membrane. It localises to the cytoplasm. It carries out the reaction ATP + H2O + cellular proteinSide 1 = ADP + phosphate + cellular proteinSide 2.. Its function is as follows. Part of the Sec protein translocase complex. Interacts with the SecYEG preprotein conducting channel. Has a central role in coupling the hydrolysis of ATP to the transfer of proteins into and across the cell membrane, serving as an ATP-driven molecular motor driving the stepwise translocation of polypeptide chains across the membrane. This is Protein translocase subunit SecA from Trichlorobacter lovleyi (strain ATCC BAA-1151 / DSM 17278 / SZ) (Geobacter lovleyi).